Reading from the N-terminus, the 451-residue chain is Tubulin alpha chain (451 aa).

Q11 is a binding site for GTP. K40 bears the N6-acetyllysine mark. GTP contacts are provided by E71, G144, T145, T179, N206, and N228. E71 provides a ligand contact to Mg(2+). Residue E254 is part of the active site.

Belongs to the tubulin family. Dimer of alpha and beta chains. A typical microtubule is a hollow water-filled tube with an outer diameter of 25 nm and an inner diameter of 15 nM. Alpha-beta heterodimers associate head-to-tail to form protofilaments running lengthwise along the microtubule wall with the beta-tubulin subunit facing the microtubule plus end conferring a structural polarity. Microtubules usually have 13 protofilaments but different protofilament numbers can be found in some organisms and specialized cells. The cofactor is Mg(2+). In terms of processing, undergoes a tyrosination/detyrosination cycle, the cyclic removal and re-addition of a C-terminal tyrosine residue by the enzymes tubulin tyrosine carboxypeptidase (TTCP) and tubulin tyrosine ligase (TTL), respectively. Acetylation of alpha chains at Lys-40 stabilizes microtubules and affects affinity and processivity of microtubule motors. This modification has a role in multiple cellular functions, ranging from cell motility, cell cycle progression or cell differentiation to intracellular trafficking and signaling.

The protein localises to the cytoplasm. The protein resides in the cytoskeleton. The enzyme catalyses GTP + H2O = GDP + phosphate + H(+). Tubulin is the major constituent of microtubules, a cylinder consisting of laterally associated linear protofilaments composed of alpha- and beta-tubulin heterodimers. Microtubules grow by the addition of GTP-tubulin dimers to the microtubule end, where a stabilizing cap forms. Below the cap, tubulin dimers are in GDP-bound state, owing to GTPase activity of alpha-tubulin. The protein is Tubulin alpha chain (TUBA) of Euglena gracilis.